The following is a 199-amino-acid chain: Recombination protein RecR (199 aa).

Residues 57–72 (CQSCRTYTEETLCPIC) form a C4-type zinc finger. Positions 81-176 (STICVVETPA…MISRIAHGVP (96 aa)) constitute a Toprim domain.

Belongs to the RecR family.

Its function is as follows. May play a role in DNA repair. It seems to be involved in an RecBC-independent recombinational process of DNA repair. It may act with RecF and RecO. In Shewanella baltica (strain OS195), this protein is Recombination protein RecR.